Consider the following 286-residue polypeptide: 4-diphosphocytidyl-2-C-methyl-D-erythritol kinase (286 aa).

Lys-11 is an active-site residue. 93 to 103 contacts ATP; sequence PFGAGLGGGSS. Asp-135 is a catalytic residue.

It belongs to the GHMP kinase family. IspE subfamily.

It catalyses the reaction 4-CDP-2-C-methyl-D-erythritol + ATP = 4-CDP-2-C-methyl-D-erythritol 2-phosphate + ADP + H(+). It participates in isoprenoid biosynthesis; isopentenyl diphosphate biosynthesis via DXP pathway; isopentenyl diphosphate from 1-deoxy-D-xylulose 5-phosphate: step 3/6. Catalyzes the phosphorylation of the position 2 hydroxy group of 4-diphosphocytidyl-2C-methyl-D-erythritol. This is 4-diphosphocytidyl-2-C-methyl-D-erythritol kinase from Chlorobaculum parvum (strain DSM 263 / NCIMB 8327) (Chlorobium vibrioforme subsp. thiosulfatophilum).